The following is a 668-amino-acid chain: Protein brown (668 aa).

Residues Met1 to Gly412 are Cytoplasmic-facing. One can recognise an ABC transporter domain in the interval Tyr31–Asn328. Residue Gly63–Thr70 coordinates ATP. The helical transmembrane segment at Leu413–Val433 threads the bilayer. The Extracellular segment spans residues Gly434–Asn453. Residues Glu454–Ile474 form a helical membrane-spanning segment. The Cytoplasmic segment spans residues Arg475 to Val490. Residues Ala491 to Ile511 traverse the membrane as a helical segment. Over Tyr512 to Tyr524 the chain is Extracellular. Residues Ile525–Leu545 traverse the membrane as a helical segment. The Cytoplasmic portion of the chain corresponds to Ser546 to Pro561. The helical transmembrane segment at Phe562–Leu582 threads the bilayer. The Extracellular portion of the chain corresponds to Lys583–Trp637. The helical transmembrane segment at Leu638–Ile658 threads the bilayer. The Cytoplasmic portion of the chain corresponds to Arg659–Tyr668.

This sequence belongs to the ABC transporter superfamily. ABCG family. Eye pigment precursor importer (TC 3.A.1.204) subfamily. As to quaternary structure, may form a heterodimer with w/white. In terms of tissue distribution, expressed in eyes.

The protein resides in the membrane. The catalysed reaction is guanine(out) + ATP + H2O = guanine(in) + ADP + phosphate + H(+). The enzyme catalyses riboflavin(in) + ATP + H2O = riboflavin(out) + ADP + phosphate + H(+). It catalyses the reaction (6S)-5,6,7,8-tetrahydrofolate(out) + ATP + H2O = (6S)-5,6,7,8-tetrahydrofolate(in) + ADP + phosphate + H(+). Functionally, ATP-dependent transporter of the ATP-binding cassette (ABC) family which transports various molecules including bioamines, neurotransmitters and metabolic intermediates. In the eye and probably in association with w/white, required for the transport of the eye red pigment precursor, guanine, into pigment cell granules. In Malpighian tubules, involved in guanine uptake. Probably in association with w/white, involved in aging-induced intestinal stem cell proliferation in the midgut by regulating tetrahydrofolate transport. The sequence is that of Protein brown from Drosophila virilis (Fruit fly).